The following is a 344-amino-acid chain: Methionine import ATP-binding protein MetN (344 aa).

One can recognise an ABC transporter domain in the interval 2–241 (IELQGLSQRF…PQHEVTRAMI (240 aa)). Residue 38-45 (GRSGAGKS) participates in ATP binding.

Belongs to the ABC transporter superfamily. Methionine importer (TC 3.A.1.24) family. In terms of assembly, the complex is composed of two ATP-binding proteins (MetN), two transmembrane proteins (MetI) and a solute-binding protein (MetQ).

The protein localises to the cell inner membrane. It catalyses the reaction L-methionine(out) + ATP + H2O = L-methionine(in) + ADP + phosphate + H(+). The enzyme catalyses D-methionine(out) + ATP + H2O = D-methionine(in) + ADP + phosphate + H(+). Its function is as follows. Part of the ABC transporter complex MetNIQ involved in methionine import. Responsible for energy coupling to the transport system. The protein is Methionine import ATP-binding protein MetN of Cupriavidus metallidurans (strain ATCC 43123 / DSM 2839 / NBRC 102507 / CH34) (Ralstonia metallidurans).